Consider the following 670-residue polypeptide: Transcription factor 4 (670 aa).

The essential for MYOD1 inhibition stretch occupies residues methionine 1–arginine 83. Disordered stretches follow at residues alanine 24 to serine 244, leucine 262 to glycine 320, histidine 335 to leucine 378, proline 406 to asparagine 426, serine 465 to asparagine 573, and lysine 637 to methionine 670. A compositionally biased stretch (polar residues) spans proline 29–asparagine 49. Phosphoserine occurs at positions 66, 87, and 92. 4 stretches are compositionally biased toward polar residues: residues glycine 107–leucine 125, glycine 136–asparagine 154, proline 205–phenylalanine 215, and proline 265–isoleucine 305. Residues threonine 336–proline 347 show a composition bias toward low complexity. Over residues asparagine 364–asparagine 373 the composition is skewed to polar residues. Serine 371 bears the Phosphoserine mark. Positions leucine 378–leucine 399 are leucine-zipper. 2 stretches are compositionally biased toward low complexity: residues leucine 466–glutamine 479 and glycine 502–glutamate 511. A Phosphoserine modification is found at serine 514. 2 stretches are compositionally biased toward basic and acidic residues: residues lysine 526 to serine 542 and proline 558 to asparagine 573. The bHLH domain occupies glutamate 567 to leucine 620. A class A specific domain region spans residues glutamine 622–serine 645.

Efficient DNA binding requires dimerization with another bHLH protein. Isoform 2 seems to form inactive heterodimers with MYOD1. Interacts with HIVEP2. Interacts with NEUROD2. Interacts with AGBL1. Interacts with BHLHA9. In terms of tissue distribution, expressed in the cerebral cortex, Purkinje and granule cell layers of the cerebellum, olfactory neuroepithelium, pyramidal cells of hippocampal layers CA1-CA4, and in the granular cells of the dentate gyrus.

The protein resides in the nucleus. In terms of biological role, transcription factor that binds to the immunoglobulin enhancer Mu-E5/KE5-motif. Involved in the initiation of neuronal differentiation. Activates transcription by binding to the E box (5'-CANNTG-3'). Isoform 2 inhibits MYOD1 activation of the cardiac alpha-actin promoter. Binds to the E-box present in the somatostatin receptor 2 initiator element (SSTR2-INR) to activate transcription. May have a regulatory function in developmental processes as well as during neuronal plasticity. This chain is Transcription factor 4 (Tcf4), found in Mus musculus (Mouse).